The chain runs to 231 residues: Aspartate/glutamate leucyltransferase (231 aa).

The protein belongs to the R-transferase family. Bpt subfamily.

The protein resides in the cytoplasm. It catalyses the reaction N-terminal L-glutamyl-[protein] + L-leucyl-tRNA(Leu) = N-terminal L-leucyl-L-glutamyl-[protein] + tRNA(Leu) + H(+). The enzyme catalyses N-terminal L-aspartyl-[protein] + L-leucyl-tRNA(Leu) = N-terminal L-leucyl-L-aspartyl-[protein] + tRNA(Leu) + H(+). Functionally, functions in the N-end rule pathway of protein degradation where it conjugates Leu from its aminoacyl-tRNA to the N-termini of proteins containing an N-terminal aspartate or glutamate. The protein is Aspartate/glutamate leucyltransferase of Pseudoalteromonas atlantica (strain T6c / ATCC BAA-1087).